Reading from the N-terminus, the 207-residue chain is Cytochrome c biogenesis ATP-binding export protein CcmA (207 aa).

The region spanning 3-206 (LMAEGLSARR…AKSLEMTGFV (204 aa)) is the ABC transporter domain. 35-42 (GPNGAGKS) contacts ATP.

It belongs to the ABC transporter superfamily. CcmA exporter (TC 3.A.1.107) family. In terms of assembly, the complex is composed of two ATP-binding proteins (CcmA) and two transmembrane proteins (CcmB).

The protein resides in the cell inner membrane. The catalysed reaction is heme b(in) + ATP + H2O = heme b(out) + ADP + phosphate + H(+). Part of the ABC transporter complex CcmAB involved in the biogenesis of c-type cytochromes; once thought to export heme, this seems not to be the case, but its exact role is uncertain. Responsible for energy coupling to the transport system. This chain is Cytochrome c biogenesis ATP-binding export protein CcmA, found in Rhizobium meliloti (strain 1021) (Ensifer meliloti).